We begin with the raw amino-acid sequence, 163 residues long: uncharacterized protein (163 aa).

A helical membrane pass occupies residues 11-31 (LSWFLLLVVVILIFFLLLSCL).

It is found in the membrane. This is an uncharacterized protein from Saccharomyces cerevisiae (strain ATCC 204508 / S288c) (Baker's yeast).